Here is a 151-residue protein sequence, read N- to C-terminus: Lipoprotein signal peptidase (151 aa).

3 helical membrane passes run Val-33–Leu-53, Trp-58–Ile-78, and Leu-87–Gly-107. Residues Asp-111 and Asp-126 contribute to the active site. Residues Phe-120–Met-140 form a helical membrane-spanning segment.

Belongs to the peptidase A8 family.

It localises to the cell membrane. The catalysed reaction is Release of signal peptides from bacterial membrane prolipoproteins. Hydrolyzes -Xaa-Yaa-Zaa-|-(S,diacylglyceryl)Cys-, in which Xaa is hydrophobic (preferably Leu), and Yaa (Ala or Ser) and Zaa (Gly or Ala) have small, neutral side chains.. It functions in the pathway protein modification; lipoprotein biosynthesis (signal peptide cleavage). Its function is as follows. This protein specifically catalyzes the removal of signal peptides from prolipoproteins. This Desulfitobacterium hafniense (strain DSM 10664 / DCB-2) protein is Lipoprotein signal peptidase.